Reading from the N-terminus, the 369-residue chain is Bi-functional coumaroyl CoA and feruloyl CoA ortho-hydroxylase Diox1 (369 aa).

The Fe2OG dioxygenase domain maps to isoleucine 209 to proline 319. Residue tyrosine 225 coordinates 2-oxoglutarate. 3 residues coordinate Fe cation: histidine 240, aspartate 242, and histidine 300. 2-oxoglutarate contacts are provided by arginine 310 and serine 312.

It belongs to the iron/ascorbate-dependent oxidoreductase family. L-ascorbate is required as a cofactor. Requires Fe(2+) as cofactor.

It carries out the reaction (E)-4-coumaroyl-CoA + 2-oxoglutarate + O2 = (E)-2,4-dihydroxycinnamoyl-CoA + succinate + CO2. The enzyme catalyses (E)-feruloyl-CoA + 2-oxoglutarate + O2 = (E)-6-hydroxyferuloyl-CoA + succinate + CO2. Its pathway is phenylpropanoid metabolism. Functionally, 2-oxoglutarate (OG)- and Fe(II)-dependent dioxygenase (2OGD) involved in scopoletin and umbelliferone biosynthesis. Converts feruloyl CoA into 6'-hydroxyferuloyl CoA, and p-coumaroyl CoA into 2,4-dihydroxycinnamoyl-CoA. This chain is Bi-functional coumaroyl CoA and feruloyl CoA ortho-hydroxylase Diox1, found in Ruta graveolens (Common rue).